The sequence spans 763 residues: MSVVGFDVGNENCVIAVAKQRGIDVLLNDESNRENPAMVSFGEKQRFMGAAAAASATMHPKSTISQLKRLIGRKFREPDVQNDLRLFPFETSEDSDGGIQIRLRYMGEIQSFSPVQILGMLLSHLKQIAEKSLKTPVSDCVIGIPSYFTNSQRLAYLDAAAIAGLRPLRLMHDSTATALGYGIYKTDLVANSSPTYIVFIDIGHCDTQVCVASFESGSMRVRSHAFDRNLGGRDFDEVLFNHFALEFKEKYNIDVYTNTKACVRLRASCEKVKKVLSANAEAQLNIECLMEEKDVRSFIKREEFEQLSAGLLERLIVPCQKALADSGLSLDQIHSVELVGSGSRIPAISKMLSSLFKRELGRTVNASECVARGCALQCAMLSPVFRVRDYEVQDSYPFAIGFSSDKGPINTPSNELLFPKGQIFPSVKVLTLHRENTFQLEAFYANHNELSPDIPTQISSFMIGPFHISHGEAARVKVRVQLNLHGIVTIDSATLIEYHKENITSEEMISEENHQSSAMKDGSLDPSSGSIGNEPKAIKRMEIPVVANVSGALTKDELSEAKQRENSLVEQDLKMESTKDKKNALESFVYEMRDKMLNTYRNTATESERECIARNLQETEEWLYEDGDDESENAYIEKLNDVKKLIDPIENRFKDGEERVQASKDLLKTIADNRMAAESLPPPRKNAVLDECHKAERWLHEKTTEQESLPKDANPELQSAEIRRKADALNATCKYIGKSNSPPAKPEHNGSYGSRKSDDMELD.

2 disordered regions span residues 509–529 (ISEE…PSSG) and 701–763 (EKTT…MELD). At serine 528 the chain carries Phosphoserine. Basic and acidic residues predominate over residues 701–714 (EKTTEQESLPKDAN).

This sequence belongs to the heat shock protein 70 (TC 1.A.33) family. HSP110/SSE subfamily.

The sequence is that of Heat shock 70 kDa protein 16 (HSP70-16) from Arabidopsis thaliana (Mouse-ear cress).